Here is a 1038-residue protein sequence, read N- to C-terminus: Eukaryotic translation initiation factor 3 subunit A (1038 aa).

Residues 92-121 are a coiled coil; that stretch reads LKKFIELAEKKVTEAQAKADEIQSSLESAA. Residues 339–523 form the PCI domain; it reads MTKAVSFVLL…GVLTFDTDVF (185 aa). A coiled-coil region spans residues 611–899; that stretch reads IDKKKEAATD…QKQREEEAEA (289 aa). Composition is skewed to basic and acidic residues over residues 621–632 and 800–901; these read ALQRKQREEETR and RHEE…EARR. 2 disordered regions span residues 621-641 and 800-1038; these read ALQRKQREEETRKRIRTQQLQ and RHEE…QQGQ. Composition is skewed to low complexity over residues 943–952 and 976–993; these read KEAAGGAAPE and GASAAAPAAPPSNGAAPS. The span at 1002–1019 shows a compositional bias: polar residues; it reads DSGSSTPPSRTQTPATTS.

This sequence belongs to the eIF-3 subunit A family. Component of the eukaryotic translation initiation factor 3 (eIF-3) complex.

The protein localises to the cytoplasm. RNA-binding component of the eukaryotic translation initiation factor 3 (eIF-3) complex, which is involved in protein synthesis of a specialized repertoire of mRNAs and, together with other initiation factors, stimulates binding of mRNA and methionyl-tRNAi to the 40S ribosome. The eIF-3 complex specifically targets and initiates translation of a subset of mRNAs involved in cell proliferation. The polypeptide is Eukaryotic translation initiation factor 3 subunit A (tif32) (Aspergillus oryzae (strain ATCC 42149 / RIB 40) (Yellow koji mold)).